An 85-amino-acid polypeptide reads, in one-letter code: Alpha-toxin Amm8 (85 aa).

An N-terminal signal peptide occupies residues 1–19; that stretch reads MNYLVMISLALLFMTGVES. Positions 21–83 constitute an LCN-type CS-alpha/beta domain; that stretch reads KDGYIVNDIN…VRTKGPGRCN (63 aa). 4 disulfides stabilise this stretch: Cys-31/Cys-82, Cys-35/Cys-55, Cys-41/Cys-65, and Cys-45/Cys-67. Position 85 (Arg-85) is a propeptide, removed by a carboxypeptidase.

The protein belongs to the long (4 C-C) scorpion toxin superfamily. Sodium channel inhibitor family. Alpha subfamily. As to expression, expressed by the venom gland.

The protein resides in the secreted. Functionally, alpha toxins bind voltage-independently at site-3 of sodium channels (Nav) and inhibit the inactivation of the activated channels, thereby blocking neuronal transmission. The toxin principally slows the inactivation process of TTX-sensitive sodium channels. It discriminates neuronal versus muscular sodium channel, as it is more potent on rat brain Nav1.2/SCN2A (EC(50)=29 nM) than on rat skeletal muscle Nav1.4/SCN4A (EC(50)=416 nM). It also shows a weak activity on Nav1.7/SCN9A (EC(50)=1.76 uM). In vivo, the toxin produces pain hypersensibility to mechanical and thermal stimuli. It also exhibits potent analgesic activity (when injected intraperitoneally), increasing hot plate and tail flick withdrawal latencies in a dose-dependent fashion. This paradoxical analgesic action, is significantly suppressed by opioid receptor antagonists, suggesting a pain-induced analgesia mechanism that involves an endogenous opioid system. This led to hypothesis that pain relief induced by peripheral administration of Amm VIII may result from sensitization of primary afferent neurons and subsequent activation of an opioid-dependent noxious inhibitory control. The protein is Alpha-toxin Amm8 of Androctonus mauritanicus mauritanicus (Scorpion).